The following is a 425-amino-acid chain: Palmitoyltransferase ZDHHC23 (425 aa).

Residues 1–81 (MKPVKKKKTE…RIPWLRGAKK (81 aa)) lie on the Cytoplasmic side of the membrane. Residues 82–99 (VNISIVPPLVLLPVFLHV) traverse the membrane as a helical segment. Residues 100 to 102 (ASW) are Lumenal-facing. Residues 103–125 (HFLLGVVVLTSLPMLALWYYYLT) form a helical membrane-spanning segment. The Cytoplasmic portion of the chain corresponds to 126–130 (HRRKE). The chain crosses the membrane as a helical span at residues 131 to 151 (QTLFFLSLGLFSLGYMYYVFL). Topologically, residues 152–159 (REVVPQGR) are lumenal. The helical transmembrane segment at 160 to 180 (VGPTQLALLTCGLLLILLALY) threads the bilayer. The Cytoplasmic portion of the chain corresponds to 181 to 292 (RAKKNPGYLS…NSCVGESNHQ (112 aa)). A DHHC domain is found at 249–299 (DWCAKCQLVRPARAWHCRICGICVRRMDHHCVWINSCVGESNHQAFILALS). The active-site S-palmitoyl cysteine intermediate is Cys279. Residues 293-313 (AFILALSIFLLTSVYGISLTL) traverse the membrane as a helical segment. The Lumenal portion of the chain corresponds to 314–343 (NTICRDRSLFTALFYCPGVYANYSSALSFT). A helical membrane pass occupies residues 344–364 (CVWYSVIITAGMAYIFLIQLI). Residues 365-425 (NISYNVTERE…TVHTPAEDIV (61 aa)) lie on the Cytoplasmic side of the membrane. Positions 422-425 (EDIV) are interaction with NOS1.

This sequence belongs to the DHHC palmitoyltransferase family. Interacts with NOS1. Expressed in the brain.

Its subcellular location is the golgi apparatus membrane. The protein localises to the golgi apparatus. It localises to the trans-Golgi network membrane. It catalyses the reaction L-cysteinyl-[protein] + hexadecanoyl-CoA = S-hexadecanoyl-L-cysteinyl-[protein] + CoA. Its function is as follows. Palmitoyltransferase that could catalyze the addition of palmitate onto various protein substrates and be involved in a variety of cellular processes. Palmitoyltransferase that mediates palmitoylation of KCNMA1, regulating localization of KCNMA1 to the plasma membrane. May be involved in NOS1 regulation and targeting to the synaptic membrane. This is Palmitoyltransferase ZDHHC23 from Mus musculus (Mouse).